Here is a 438-residue protein sequence, read N- to C-terminus: MSTMTPREIVHELDQHIVGQQDAKKAVAIALRNRWRRMQLDAKLRTEITPKNILMIGPTGVGKTEIARRLAKLTNAPFIKVEATKFTEVGYVGRDVESIIRDLVDSSIKMMREQEMTKVRHRAEEAAEERILNALLPPARGEDGAVEDSSTRQIFRKKLREGQLDDKEIEIDVSATPVGVEIMAPPGMEDMTSQLQNMFSSMNTGKTKKTKLTVKKAFKKLTDEEAAKLVNEEELKAQAIDAAEQNGIVFIDEIDKVAKREGNSGADVSREGVQRDLLPLIEGCTVSTKHGMIKTDHILFITSGAFHVSKPSDLIPELQGRLPIRVELQALTPDDFERILTEPTASLTEQHQSLLATEGTQIEFTADGIRKIAEIAYQVNKSTENIGARRLHTVLEKLLEEISFAAGESDNNVTIDAAFVDGQLGELTKNEDLSRFIL.

ATP-binding positions include Val18, 60 to 65 (GVGKTE), Asp252, Glu317, and Arg389.

This sequence belongs to the ClpX chaperone family. HslU subfamily. A double ring-shaped homohexamer of HslV is capped on each side by a ring-shaped HslU homohexamer. The assembly of the HslU/HslV complex is dependent on binding of ATP.

It is found in the cytoplasm. In terms of biological role, ATPase subunit of a proteasome-like degradation complex; this subunit has chaperone activity. The binding of ATP and its subsequent hydrolysis by HslU are essential for unfolding of protein substrates subsequently hydrolyzed by HslV. HslU recognizes the N-terminal part of its protein substrates and unfolds these before they are guided to HslV for hydrolysis. This Saccharophagus degradans (strain 2-40 / ATCC 43961 / DSM 17024) protein is ATP-dependent protease ATPase subunit HslU.